Reading from the N-terminus, the 348-residue chain is Probable UDP-arabinopyranose mutase 5 (348 aa).

The DXD motif motif lies at 100-102 (DDD). An N-linked (Glc...) arginine glycan is attached at Arg-148.

The protein belongs to the RGP family. As to quaternary structure, heteromers with RGP1 and RGP2. Mn(2+) serves as cofactor. It depends on Mg(2+) as a cofactor. Post-translationally, reversibly glycosylated in vitro by UDP-glucose, UDP-xylose and UDP-galactose, but not UDP-mannose. In terms of tissue distribution, widely expressed at low levels.

Its subcellular location is the cytoplasm. It localises to the cytosol. It is found in the golgi apparatus. The enzyme catalyses UDP-beta-L-arabinofuranose = UDP-beta-L-arabinopyranose. Probable UDP-L-arabinose mutase involved in the biosynthesis of cell wall non-cellulosic polysaccharides. The chain is Probable UDP-arabinopyranose mutase 5 from Arabidopsis thaliana (Mouse-ear cress).